A 102-amino-acid chain; its full sequence is MPSQKIRIRLKAFDHKLLDQSVGEIVDTAKRTGARVAGPIPLPTVINKYCVLRGPHVDKKSREQFEIRTHKRLIDILDPTQQTVDALMKLDLSAGVDVEIKL.

Belongs to the universal ribosomal protein uS10 family. In terms of assembly, part of the 30S ribosomal subunit.

Functionally, involved in the binding of tRNA to the ribosomes. This chain is Small ribosomal subunit protein uS10, found in Geobacter sulfurreducens (strain ATCC 51573 / DSM 12127 / PCA).